A 365-amino-acid polypeptide reads, in one-letter code: Dehydroprecondylocarpine acetate synthase (365 aa).

Residues C105, C108, C111, and C119 each contribute to the Zn(2+) site. 2 N-linked (GlcNAc...) asparagine glycosylation sites follow: N142 and N147. NADP(+) contacts are provided by L194, G196, L197, S216, T217, T218, K221, L279, A281, S303, A305, and R350.

Belongs to the zinc-containing alcohol dehydrogenase family. As to quaternary structure, homodimer. Interaction with catharanthine synthase (CS) and tabersonine synthase (TS). Zn(2+) is required as a cofactor.

The protein resides in the cytoplasm. Its subcellular location is the cytosol. It carries out the reaction dihydroprecondylocarpine acetate + NADP(+) = precondylocarpine acetate + NADPH + H(+). The protein operates within alkaloid biosynthesis. Functionally, component of the seco-iridoid and derivatives monoterpenoid indole alkaloids (MIAs, e.g. vinblastine, catharanthine, tabersonine, vincadifformine, vindoline, vincristine, quinine and strychnine) biosynthesis pathway. Catalyzes the non-canonical 1,4-reduction of an alpha,beta-unsaturated iminium moiety; by contrast with the classic alcohol dehydrogenase mechanism, this reaction does not require a catalytic zinc or proton relay. Converts precondylocarpine acetate to dihydroprecondylocarpine acetate, that is spontaneously converted into dehydrosecodine intermediate, precursor of angryline. May also trigger the non-stereoselective 1,4-reduction reaction at C15 of dehydrosecodine leading to the production of secodine, a precursor of vincadifformine. The protein is Dehydroprecondylocarpine acetate synthase of Catharanthus roseus (Madagascar periwinkle).